The primary structure comprises 481 residues: Putative cytochrome P450 520B1 (481 aa).

C427 is a binding site for heme.

This sequence belongs to the cytochrome P450 family. The cofactor is heme.

The sequence is that of Putative cytochrome P450 520B1 (cyp520B1) from Dictyostelium discoideum (Social amoeba).